The following is a 111-amino-acid chain: Cell division protein FtsB (111 aa).

Topologically, residues 1 to 3 are cytoplasmic; that stretch reads MRL. The chain crosses the membrane as a helical span at residues 4–21; it reads ITLFLLLLLLAIQYPLWL. Residues 22–111 are Periplasmic-facing; it reads GKGGWLRVWD…PAALQPNHRH (90 aa). Residues 28 to 64 adopt a coiled-coil conformation; sequence RVWDMQKQVASQNQRNAELKQRNLKLEGEVKDLKEGT. Residues 90 to 111 are disordered; it reads PAPKTSETPLPPPAALQPNHRH.

It belongs to the FtsB family. As to quaternary structure, part of a complex composed of FtsB, FtsL and FtsQ.

Its subcellular location is the cell inner membrane. In terms of biological role, essential cell division protein. May link together the upstream cell division proteins, which are predominantly cytoplasmic, with the downstream cell division proteins, which are predominantly periplasmic. This chain is Cell division protein FtsB, found in Ralstonia nicotianae (strain ATCC BAA-1114 / GMI1000) (Ralstonia solanacearum).